We begin with the raw amino-acid sequence, 181 residues long: Malignant T-cell-amplified sequence 1 (181 aa).

Thr81 carries the post-translational modification Phosphothreonine; by MAPK1 and MAPK3. The 80-residue stretch at 92-171 (LPHQQVDKGA…IGIENIHYLN (80 aa)) folds into the PUA domain. The residue at position 118 (Ser118) is a Phosphoserine; by CDK1.

It belongs to the MCTS1 family. In terms of assembly, interacts (via PUA domain) with DENR; the complex regulates translation reinitiation. Phosphorylation is critical for stabilization and promotion of cell proliferation. In terms of tissue distribution, ubiquitous. Over-expressed in T-cell lymphoid cell lines and in non-Hodgkin lymphoma cell lines as well as in a subset of primary large B-cell lymphomas.

Its subcellular location is the cytoplasm. Functionally, translation regulator forming a complex with DENR to promote translation reinitiation. Translation reinitiation is the process where the small ribosomal subunit remains attached to the mRNA following termination of translation of a regulatory upstream ORF (uORF), and resume scanning on the same mRNA molecule to initiate translation of a downstream ORF, usually the main ORF (mORF). The MCTS1/DENR complex is pivotal to two linked mechanisms essential for translation reinitiation. Firstly, the dissociation of deacylated tRNAs from post-termination 40S ribosomal complexes during ribosome recycling. Secondly, the recruitment in an EIF2-independent manner of aminoacylated initiator tRNA to P site of 40S ribosomes for a new round of translation. This regulatory mechanism governs the translation of more than 150 genes which translation reinitiation is MCTS1/DENR complex-dependent. Consequently, modulates various unrelated biological processes including cell cycle regulation and DNA damage signaling and repair. Notably, it positively regulates interferon gamma immunity to mycobacteria by enhancing the translation of JAK2. The protein is Malignant T-cell-amplified sequence 1 (MCTS1) of Homo sapiens (Human).